The following is a 348-amino-acid chain: Probable UDP-arabinopyranose mutase 5 (348 aa).

The DXD motif motif lies at 100-102 (DDD). R148 carries N-linked (Glc...) arginine glycosylation.

Belongs to the RGP family. In terms of assembly, heteromers with RGP1 and RGP2. Requires Mn(2+) as cofactor. The cofactor is Mg(2+). In terms of processing, reversibly glycosylated in vitro by UDP-glucose, UDP-xylose and UDP-galactose, but not UDP-mannose. Widely expressed at low levels.

Its subcellular location is the cytoplasm. It is found in the cytosol. It localises to the golgi apparatus. The enzyme catalyses UDP-beta-L-arabinofuranose = UDP-beta-L-arabinopyranose. Its function is as follows. Probable UDP-L-arabinose mutase involved in the biosynthesis of cell wall non-cellulosic polysaccharides. In Arabidopsis thaliana (Mouse-ear cress), this protein is Probable UDP-arabinopyranose mutase 5.